The following is a 109-amino-acid chain: Large ribosomal subunit protein P1 (109 aa).

Residues 90–109 form a disordered region; it reads AAAKKEEEEEDDDMGFGLFD.

The protein belongs to the eukaryotic ribosomal protein P1/P2 family. P1 and P2 exist as dimers at the large ribosomal subunit.

Functionally, plays an important role in the elongation step of protein synthesis. In Trypanosoma cruzi, this protein is Large ribosomal subunit protein P1.